The chain runs to 255 residues: uncharacterized protein (255 aa).

Residues 1–28 form the signal peptide; that stretch reads MFKLNFKNNYKVLTLLFSLTLSMFVSNA. N-linked (GlcNAc...) asparagine glycosylation is found at asparagine 38, asparagine 61, and asparagine 83.

It localises to the secreted. This is an uncharacterized protein from Dictyostelium discoideum (Social amoeba).